The following is a 313-amino-acid chain: Porphobilinogen deaminase (313 aa).

C242 is modified (S-(dipyrrolylmethanemethyl)cysteine).

Belongs to the HMBS family. Monomer. The cofactor is dipyrromethane.

The enzyme catalyses 4 porphobilinogen + H2O = hydroxymethylbilane + 4 NH4(+). Its pathway is porphyrin-containing compound metabolism; protoporphyrin-IX biosynthesis; coproporphyrinogen-III from 5-aminolevulinate: step 2/4. Functionally, tetrapolymerization of the monopyrrole PBG into the hydroxymethylbilane pre-uroporphyrinogen in several discrete steps. This is Porphobilinogen deaminase from Escherichia coli O7:K1 (strain IAI39 / ExPEC).